The chain runs to 368 residues: L-lactate oxidase (368 aa).

In terms of domain architecture, FMN hydroxy acid dehydrogenase spans 13 to 368 (VNAIDVLDLA…KQMKVKTTFA (356 aa)). Tyr-39 provides a ligand contact to pyruvate. FMN contacts are provided by residues 92 to 94 (PIA), Ser-121, and Gln-143. Tyr-145 contacts pyruvate. Thr-171 is an FMN binding site. Arg-180 lines the pyruvate pocket. Residues Lys-239 and Ser-261 each coordinate FMN. His-263 and Arg-266 together coordinate pyruvate. The active-site Proton acceptor is the His-263. FMN contacts are provided by residues 294-298 (DGGVQ) and Arg-318.

Belongs to the FMN-dependent alpha-hydroxy acid dehydrogenase family. In terms of assembly, homotetramer. It depends on FMN as a cofactor.

The catalysed reaction is (S)-lactate + O2 = pyruvate + H2O2. The enzyme catalyses 2-hydroxyoctanoate + O2 = 2-oxooctanoate + H2O2. Catalyzes the oxidation of (S)-lactate (L-lactate) to pyruvate, with a reduction of O2 to H2O2. To a lesser extent is also able to use 2-hydroxyoctanoate as substrate. May be involved in the utilization of L-lactate as an energy source for growth. The sequence is that of L-lactate oxidase from Lacticaseibacillus rhamnosus (strain LMS2-1).